The following is a 122-amino-acid chain: MIQPQTHLNVADNSGARELMCIRIIGASNRRYAHIGDVIVAVIKEAVPNTPLERSEVIRAVIVRTCKELKRNNGMIIRYDDNAAVVIDQEGNPKGTRIFGAIPRELRQLNFTKIVSLAPEVL.

This sequence belongs to the universal ribosomal protein uL14 family. As to quaternary structure, part of the 50S ribosomal subunit.

The protein resides in the plastid. It is found in the chloroplast. Binds to 23S rRNA. In Carica papaya (Papaya), this protein is Large ribosomal subunit protein uL14c.